A 328-amino-acid chain; its full sequence is uncharacterized protein (328 aa).

The region spanning 10–55 (KMGFGHAMLLKMGWKGKGLGVEEDGRTEIIVNKKKQDKVGVGASIS) is the G-patch domain. Positions 97 to 291 (EKITFKRTIK…KKSFSVSKTR (195 aa)) are disordered. The segment covering 101-110 (FKRTIKKNSK) has biased composition (basic residues). Over residues 116 to 126 (SDSDSDSDSES) the composition is skewed to acidic residues. Composition is skewed to low complexity over residues 141 to 158 (DSDS…SSSS) and 210 to 240 (SSSS…SSSE). Residues 248-257 (KNKNKNKNKK) are compositionally biased toward basic residues.

This is an uncharacterized protein from Dictyostelium discoideum (Social amoeba).